The sequence spans 252 residues: NAD-dependent protein deacetylase (252 aa).

In terms of domain architecture, Deacetylase sirtuin-type spans 2-243; it reads DSKRDEKILE…DRVVKELKKI (242 aa). Residues alanine 28, threonine 32, phenylalanine 39, arginine 40, glutamine 109, isoleucine 111, aspartate 112, and histidine 127 each contribute to the NAD(+) site. Nicotinamide is bound at residue phenylalanine 39. 2 residues coordinate nicotinamide: isoleucine 111 and aspartate 112. Histidine 127 (proton acceptor) is an active-site residue. The Zn(2+) site is built by cysteine 135, cysteine 138, cysteine 148, and cysteine 150. The NAD(+) site is built by threonine 188, serine 189, and asparagine 211.

It belongs to the sirtuin family. Class U subfamily. Requires Zn(2+) as cofactor.

Its subcellular location is the cytoplasm. The catalysed reaction is N(6)-acetyl-L-lysyl-[protein] + NAD(+) + H2O = 2''-O-acetyl-ADP-D-ribose + nicotinamide + L-lysyl-[protein]. Functionally, NAD-dependent protein deacetylase which modulates the activities of several enzymes which are inactive in their acetylated form. In Fusobacterium nucleatum subsp. nucleatum (strain ATCC 25586 / DSM 15643 / BCRC 10681 / CIP 101130 / JCM 8532 / KCTC 2640 / LMG 13131 / VPI 4355), this protein is NAD-dependent protein deacetylase.